The sequence spans 322 residues: Tlg2p-like protein a (322 aa).

Residues Met-1–Ala-301 are Cytoplasmic-facing. Residues Lys-116–Ser-146 are a coiled coil. The region spanning Glu-226 to Ala-288 is the t-SNARE coiled-coil homology domain. Residues Ser-302–Leu-322 traverse the membrane as a helical; Anchor for type IV membrane protein segment.

It belongs to the syntaxin family. In terms of assembly, interacts with VTI12 and SYP61 to form a t-SNARE complex and with VPS45. Interacts with TNO1. Binds to YKT61 and YKT62. Core constituent of the SNARE complex required for membrane fusion at the trans-Golgi network. In terms of tissue distribution, mostly expressed in flowers, to a lower extent in leaves and roots, and, at low levels, in stems.

The protein resides in the golgi apparatus. It localises to the trans-Golgi network membrane. In terms of biological role, contributes to the regulation of secretory and vacuolar transport pathways in the post-Golgi network, and to the maintenance of the Golgi apparatus and trans-Golgi network (TGN) morphologies. Together with VTI12, required for membrane fusion. Vesicle trafficking protein that functions in the secretory pathway and mediates liposome fusion; the fusion of phospholipid vesicles containing SYP41 and VTI12 is triggered by YKT61 and YKT62. Required for extracellular resistance responses to a fungal pathogen. Also involved in the protection of chloroplasts from salicylic acid-dependent biotic stress. This Arabidopsis thaliana (Mouse-ear cress) protein is Tlg2p-like protein a.